Here is a 285-residue protein sequence, read N- to C-terminus: Shikimate dehydrogenase (NADP(+)) (285 aa).

Shikimate contacts are provided by residues 20-22 (SIS) and serine 67. The active-site Proton acceptor is the lysine 71. Glutamate 83 provides a ligand contact to NADP(+). Shikimate contacts are provided by asparagine 92 and aspartate 107. NADP(+) is bound by residues 129 to 133 (GAGGA) and methionine 227. Tyrosine 229 serves as a coordination point for shikimate. An NADP(+)-binding site is contributed by glycine 250.

Belongs to the shikimate dehydrogenase family. As to quaternary structure, homodimer.

It carries out the reaction shikimate + NADP(+) = 3-dehydroshikimate + NADPH + H(+). The protein operates within metabolic intermediate biosynthesis; chorismate biosynthesis; chorismate from D-erythrose 4-phosphate and phosphoenolpyruvate: step 4/7. Involved in the biosynthesis of the chorismate, which leads to the biosynthesis of aromatic amino acids. Catalyzes the reversible NADPH linked reduction of 3-dehydroshikimate (DHSA) to yield shikimate (SA). The polypeptide is Shikimate dehydrogenase (NADP(+)) (Streptococcus gordonii (strain Challis / ATCC 35105 / BCRC 15272 / CH1 / DL1 / V288)).